We begin with the raw amino-acid sequence, 409 residues long: Nucleoprotein (409 aa).

5 disordered regions span residues 1-32 (MASG…SSGN), 45-69 (NSHP…QQHG), 122-145 (DVKS…LRFS), 164-194 (RSGR…GSED), and 238-259 (VDQV…DKMN). Over residues 15 to 31 (PVIKLGGPKPPKVGSSG) the composition is skewed to low complexity. The segment at 29-160 (SSGNASWFQA…GNFRWDFIPL (132 aa)) is RNA-binding. The CoV N NTD domain occupies 31–156 (GNASWFQAIK…GGPDGNFRWD (126 aa)). A compositionally biased stretch (basic and acidic residues) spans 122 to 138 (DVKSRSHQGTRDPDKFD). Low complexity predominate over residues 164–179 (RSGRSTAASSAASSRA). 2 stretches are compositionally biased toward basic and acidic residues: residues 180 to 192 (PSRD…RSGS) and 247 to 259 (KGKE…DKMN). 2 positions are modified to phosphoserine; by host: Ser190 and Ser192. In terms of domain architecture, CoV N CTD spans 219–331 (ADEMAHRRYC…QCVDGVGTRP (113 aa)). A dimerization region spans residues 226-333 (RYCKRTIPPG…VDGVGTRPKD (108 aa)). Cys320 and Cys323 form a disulfide bridge. The segment at 326-409 (GVGTRPKDDE…GDSALGENEL (84 aa)) is disordered. Positions 341–357 (RSSSRPATRTSSPAPRQ) are enriched in low complexity. Positions 358-367 (QRPKKEKKPK) are enriched in basic residues. Residue Thr378 is modified to Phosphothreonine; by host. A Phosphoserine; by host modification is found at Ser379.

It belongs to the gammacoronavirus nucleocapsid protein family. Homooligomer. Both monomeric and oligomeric forms interact with RNA. Interacts with protein M. Interacts with NSP3; this interaction serves to tether the genome to the newly translated replicase-transcriptase complex at a very early stage of infection. Post-translationally, ADP-ribosylated. The ADP-ribosylation is retained in the virion during infection. Phosphorylated on serine and threonine residues.

The protein localises to the virion. It is found in the host endoplasmic reticulum-Golgi intermediate compartment. It localises to the host Golgi apparatus. In terms of biological role, packages the positive strand viral genome RNA into a helical ribonucleocapsid (RNP) and plays a fundamental role during virion assembly through its interactions with the viral genome and membrane protein M. Plays an important role in enhancing the efficiency of subgenomic viral RNA transcription as well as viral replication. This is Nucleoprotein from Avian infectious bronchitis virus (strain Arkansas 99) (IBV).